The sequence spans 491 residues: Monothiol glutaredoxin-S11 (491 aa).

Glutaredoxin domains follow at residues 151-253, 287-389, and 394-491; these read NKRL…NIPL, KERL…GIVA, and EDRL…TLSE. Residue lysine 411 coordinates glutathione. Cysteine 419 lines the [2Fe-2S] cluster pocket. Residues arginine 448, phenylalanine 460, and 473–474 each bind glutathione; that span reads CD.

The protein belongs to the glutaredoxin family. CGFS subfamily.

The protein localises to the cytoplasm. Functionally, may only reduce GSH-thiol disulfides, but not protein disulfides. This Oryza sativa subsp. japonica (Rice) protein is Monothiol glutaredoxin-S11 (GRXS11).